Here is a 178-residue protein sequence, read N- to C-terminus: Hypoxanthine-guanine phosphoribosyltransferase (178 aa).

Diphosphate-binding residues include lysine 46 and glycine 47. Residue aspartate 103 coordinates Mg(2+). Aspartate 106 functions as the Proton acceptor in the catalytic mechanism. GMP-binding positions include lysine 134, 155 to 156, and aspartate 162; that span reads FL. Arginine 168 contributes to the diphosphate binding site.

The protein belongs to the purine/pyrimidine phosphoribosyltransferase family. It depends on Mg(2+) as a cofactor.

It localises to the cytoplasm. The enzyme catalyses IMP + diphosphate = hypoxanthine + 5-phospho-alpha-D-ribose 1-diphosphate. It carries out the reaction GMP + diphosphate = guanine + 5-phospho-alpha-D-ribose 1-diphosphate. It functions in the pathway purine metabolism; IMP biosynthesis via salvage pathway; IMP from hypoxanthine: step 1/1. Its pathway is purine metabolism; GMP biosynthesis via salvage pathway; GMP from guanine: step 1/1. Purine salvage pathway enzyme that catalyzes the transfer of the ribosyl-5-phosphate group from 5-phospho-alpha-D-ribose 1-diphosphate (PRPP) to the N9 position of the 6-oxopurines hypoxanthine and guanine to form the corresponding ribonucleotides IMP (inosine 5'-monophosphate) and GMP (guanosine 5'-monophosphate), with the release of PPi. This is Hypoxanthine-guanine phosphoribosyltransferase (hpt) from Aquifex aeolicus (strain VF5).